The primary structure comprises 695 residues: Protein EARLY FLOWERING 3 (695 aa).

Basic and acidic residues predominate over residues 1-11 (MKRGKDEEKIL). Disordered regions lie at residues 1–33 (MKRGKDEEKILEPMFPRLHVNDADKGGPRAPPR), 48–75 (RFGDHGTMNSRSNNTSTLVHPGPSSQPC), 136–159 (RSQSHGRTKSGIEKEKHTPMVAPS), 216–283 (EKSA…REYS), and 541–653 (CSSQ…QTTR). Over residues 54–74 (TMNSRSNNTSTLVHPGPSSQP) the composition is skewed to polar residues. Basic and acidic residues-rich tracts occupy residues 216-226 (EKSASSHDRVN), 234-253 (QESRNRLYRDGGKTRLKDTD), and 260-283 (LATENHSQEGHGSPEDIDNDREYS). Residues 261–484 (ATENHSQEGH…VMSPSEGLIY (224 aa)) are interaction with ELF3. Composition is skewed to polar residues over residues 551–567 (PNEQMNQFGHPGNLQNT) and 579–588 (APQQQQQPTK). 2 stretches are compositionally biased toward low complexity: residues 598-616 (QGSTGSSPSGPQGISGSKS) and 636-653 (TMTTTTTTTRTTVTQTTR).

Interacts specifically with both Pr and Pfr forms of phytochrome B. Interacts with ELF4. May form a homodimer.

It localises to the nucleus. Its function is as follows. May be a transcription factor part of a circadian clock input pathway. Acts within a 'zeitnehmer' feedback loop and is involved in its own circadian regulation. Has no role in regulating circadian clock function in the dark. Part of a corepressor complex consisting of ELF4, ELF3, and LUX involved in the transcriptional regulation of APRR9. The activity of the protein may be decreased in long day conditions due to its interaction with phytochrome B (phyB). Can regulate the initiation of flowering independently of phyB. Also involved in responses to nematode parasitism, like the formation of the nematode feeding structure. This is Protein EARLY FLOWERING 3 (ELF3) from Arabidopsis thaliana (Mouse-ear cress).